Consider the following 386-residue polypeptide: AT-hook motif nuclear-localized protein 8 (386 aa).

Disordered stretches follow at residues 1–175 (MDSR…LGGT) and 303–372 (KQSS…LHPH). Residues 54–70 (QQQSQTFHQQQQQQMDQ) show a composition bias toward low complexity. Basic residues predominate over residues 101 to 110 (VKKKRGRPRK). A Bipartite nuclear localization signal motif is present at residues 102-110 (KKKRGRPRK). A DNA-binding region (a.T hook 1) is located at residues 102 to 114 (KKKRGRPRKYTPD). The span at 126 to 135 (PLLSAASNSY) shows a compositional bias: polar residues. A compositionally biased stretch (gly residues) spans 136-147 (GEGGVGDSGGNG). The segment at residues 155–167 (KRNRGRPPGSSKK) is a DNA-binding region (a.T hook 2). Residues 174-316 (GTSGVGFTPH…VNIARGQNPE (143 aa)) form the PPC domain. 2 stretches are compositionally biased toward low complexity: residues 328 to 337 (GSVSQGPSSE) and 361 to 372 (QQQQQQQPLHPH).

It is found in the nucleus. Its function is as follows. Transcription factor that specifically binds AT-rich DNA sequences related to the nuclear matrix attachment regions (MARs). This is AT-hook motif nuclear-localized protein 8 from Arabidopsis thaliana (Mouse-ear cress).